We begin with the raw amino-acid sequence, 376 residues long: Uroporphyrinogen decarboxylase (376 aa).

Substrate-binding positions include 29–33 (RQAGR), Asp-79, Tyr-155, Ser-210, and His-342.

The protein belongs to the uroporphyrinogen decarboxylase family. In terms of assembly, homodimer.

It is found in the cytoplasm. It catalyses the reaction uroporphyrinogen III + 4 H(+) = coproporphyrinogen III + 4 CO2. The protein operates within porphyrin-containing compound metabolism; protoporphyrin-IX biosynthesis; coproporphyrinogen-III from 5-aminolevulinate: step 4/4. In terms of biological role, catalyzes the decarboxylation of four acetate groups of uroporphyrinogen-III to yield coproporphyrinogen-III. This Paracidovorax citrulli (strain AAC00-1) (Acidovorax citrulli) protein is Uroporphyrinogen decarboxylase.